The following is a 232-amino-acid chain: Probable anion ABC transporter permease protein HVO_1887 (232 aa).

Residues 16–217 (TAVSLYVSTA…ALVLGVNALG (202 aa)) form the ABC transmembrane type-1 domain. The next 5 membrane-spanning stretches (helical) occupy residues 23 to 43 (STAA…AVGF), 55 to 75 (VIST…LLVL), 93 to 113 (MILS…LSAV), 146 to 166 (IVTA…SVLI), and 198 to 218 (TGIA…ALGA).

The protein belongs to the binding-protein-dependent transport system permease family. As to quaternary structure, the complex is composed of two ATP-binding proteins (HVO_1886), two transmembrane proteins (HVO_1887) and a solute-binding protein (HVO_1888).

It localises to the cell membrane. In terms of biological role, part of an ABC transporter complex involved in anions import. Responsible for the translocation of the substrate across the membrane. In Haloferax volcanii (strain ATCC 29605 / DSM 3757 / JCM 8879 / NBRC 14742 / NCIMB 2012 / VKM B-1768 / DS2) (Halobacterium volcanii), this protein is Probable anion ABC transporter permease protein HVO_1887.